A 652-amino-acid chain; its full sequence is Neuroendocrine convertase 2 (652 aa).

A signal peptide spans Met1 to Ala22. The propeptide occupies Val23–Arg107. Residues Gln136–Val481 form the Peptidase S8 domain. Residue Asn167 is glycosylated (N-linked (GlcNAc...) asparagine). Residues Asp174 and His215 each act as charge relay system in the active site. Intrachain disulfides connect Cys232–Cys382 and Cys324–Cys354. An N-linked (GlcNAc...) asparagine glycan is attached at Asn290. Ser390 serves as the catalytic Charge relay system. Asn451 is a glycosylation site (N-linked (GlcNAc...) asparagine). The 137-residue stretch at Thr489–Ala625 folds into the P/Homo B domain. A disulfide bond links Cys496 and Cys522. Residues Ile501–His652 are required for ubiquitination-mediated degradation. Asn542 carries an N-linked (GlcNAc...) asparagine glycan.

This sequence belongs to the peptidase S8 family. Furin subfamily. Interacts (via C-terminus) with F-box protein fsn-1 (via SPRY domain); the interaction results in egl-3 proteasomal degradation. In terms of processing, ubiquitinated. In terms of tissue distribution, expressed in head and tail ganglia. Expressed in neurons including mechanosensory and motor neurons, and interneurons (at protein level). Expressed in the nerve ring, ventral nerve cord and intestine.

The protein localises to the cell projection. Its subcellular location is the axon. The protein resides in the cytoplasmic vesicle. It is found in the secretory vesicle lumen. It localises to the secreted. It catalyses the reaction Release of protein hormones and neuropeptides from their precursors, generally by hydrolysis of -Lys-Arg-|- bonds.. Its function is as follows. Serine endoprotease which cleaves preproteins at paired basic amino acids. Processes FMRFamide-like (flp) and neuropeptide-like protein (nlp) neuropeptides. Probably by processing flp-1 and flp-18, modulates the neuronal excitation-inhibition balance and thus the level of activity of the locomotor circuit. Regulates sensitivity to mechanosensory stimuli. By processing neuropeptides, modulates basal acetylcholine release at the ventral cord neuromuscular junctions. Probably by processing flp neuropeptides, regulates the turning step of male mating behavior. Cleaves pro-insulin-like proteins ins-3, ins-4 and ins-6 into their mature active forms. Together with convertase kpc-1, cleaves pro-insulin-like protein ins-18. By controlling ins-4 and ins-6 processing and thus the activation of the daf-2/InsR pathway, negatively modulates synapse development and synaptic transmission at neuromuscular junctions. Similarly, by controlling ins-4 and ins-6 processing, negatively regulates dauer formation under optimal environmental conditions. Under adverse environmental conditions, may promote dauer formation by processing ins-18, a daf-2/InsR antagonist. May cleave dense-core vesicle membrane protein ida-1. Involved in egg-laying, fat storage and locomotion. The chain is Neuroendocrine convertase 2 from Caenorhabditis elegans.